The chain runs to 485 residues: MEYKLLIGLEVHVQLGLKTKAFCGCKNDFGGIPNSRVCPICLGLPGALPSVNKELVSSAILAGHATNSTIRNIVKFDRKHYAYPDLPKGYQISQNDAPICENGFIFIKTSLGVKRINIARIHMEEDSGKSLHLLSNDNQSYIDFNRAGAPLLEIVSQPDIRSGEEAVAYLNALREIFRYLDLSECSMENGSFRCDVNINLLINENDVNYKTPISEIKNLNSFKSVKLAIDYEESKQKEEWILYRKTLESVGKCTMGFDDKKGITVLQRSKETISDYRYIKDPDLPLIKLESDYIENIKSHRMVELPFDARIRLQEQYGLSDFDVVTLTSDKNLVKYFEEAALTSSEPKKVANWILSEVLSVLNEREIGILDFNLPASYIGELVEFILNGKISGKISKEIFLEMVDRNVSSITIINEKKLEQISDKSFIESIVIEVLNENPKSIELYKKGKSHAVKFMMGQIMRKTSGKVNPVLSNEILMNKLQDV.

It belongs to the GatB/GatE family. GatB subfamily. Heterotrimer of A, B and C subunits.

The catalysed reaction is L-glutamyl-tRNA(Gln) + L-glutamine + ATP + H2O = L-glutaminyl-tRNA(Gln) + L-glutamate + ADP + phosphate + H(+). It catalyses the reaction L-aspartyl-tRNA(Asn) + L-glutamine + ATP + H2O = L-asparaginyl-tRNA(Asn) + L-glutamate + ADP + phosphate + 2 H(+). In terms of biological role, allows the formation of correctly charged Asn-tRNA(Asn) or Gln-tRNA(Gln) through the transamidation of misacylated Asp-tRNA(Asn) or Glu-tRNA(Gln) in organisms which lack either or both of asparaginyl-tRNA or glutaminyl-tRNA synthetases. The reaction takes place in the presence of glutamine and ATP through an activated phospho-Asp-tRNA(Asn) or phospho-Glu-tRNA(Gln). This Borrelia recurrentis (strain A1) protein is Aspartyl/glutamyl-tRNA(Asn/Gln) amidotransferase subunit B.